The following is a 549-amino-acid chain: Probable serine/threonine-protein kinase WNK5 (549 aa).

The 259-residue stretch at 25 to 283 (GRFREVLGKG…AKELLADPFL (259 aa)) folds into the Protein kinase domain. Residues 105–108 (TELF) and K155 each bind ATP. D172 serves as the catalytic Proton acceptor. A disordered region spans residues 414–490 (ESFGHEDDED…SPAIDDDQNQ (77 aa)). Over residues 452 to 463 (DDSSNDVIPDMD) the composition is skewed to acidic residues. The segment covering 467 to 476 (RSSNRLLNSS) has biased composition (low complexity). Phosphoserine is present on S504. Residues 525–549 (RGRGFDPNTNELQPQPSSTDFIRRC) are disordered. Residues 531-549 (PNTNELQPQPSSTDFIRRC) show a composition bias toward polar residues.

This sequence belongs to the protein kinase superfamily. Ser/Thr protein kinase family. WNK subfamily. Interacts with AHK4.

The enzyme catalyses L-seryl-[protein] + ATP = O-phospho-L-seryl-[protein] + ADP + H(+). It catalyses the reaction L-threonyl-[protein] + ATP = O-phospho-L-threonyl-[protein] + ADP + H(+). Its function is as follows. Regulates flowering time by modulating the photoperiod pathway. The protein is Probable serine/threonine-protein kinase WNK5 (WNK5) of Arabidopsis thaliana (Mouse-ear cress).